The chain runs to 346 residues: Fusaric acid resistance protein FusC (346 aa).

4 helical membrane passes run V10–G30, V248–V268, M291–P311, and G315–L335.

The protein belongs to the aromatic acid exporter ArAE (TC 2.A.85) family.

It is found in the cell membrane. In terms of biological role, involved in the resistance (detoxification) of the fungal toxin fusaric acid. This is Fusaric acid resistance protein FusC (fusC) from Burkholderia cepacia (Pseudomonas cepacia).